A 159-amino-acid chain; its full sequence is ATP synthase subunit b (159 aa).

The helical transmembrane segment at 4-24 (VGINGTLIVQLVTFVILVALL) threads the bilayer.

Belongs to the ATPase B chain family. In terms of assembly, F-type ATPases have 2 components, F(1) - the catalytic core - and F(0) - the membrane proton channel. F(1) has five subunits: alpha(3), beta(3), gamma(1), delta(1), epsilon(1). F(0) has three main subunits: a(1), b(2) and c(10-14). The alpha and beta chains form an alternating ring which encloses part of the gamma chain. F(1) is attached to F(0) by a central stalk formed by the gamma and epsilon chains, while a peripheral stalk is formed by the delta and b chains.

The protein resides in the cell inner membrane. In terms of biological role, f(1)F(0) ATP synthase produces ATP from ADP in the presence of a proton or sodium gradient. F-type ATPases consist of two structural domains, F(1) containing the extramembraneous catalytic core and F(0) containing the membrane proton channel, linked together by a central stalk and a peripheral stalk. During catalysis, ATP synthesis in the catalytic domain of F(1) is coupled via a rotary mechanism of the central stalk subunits to proton translocation. Its function is as follows. Component of the F(0) channel, it forms part of the peripheral stalk, linking F(1) to F(0). The sequence is that of ATP synthase subunit b from Acidithiobacillus ferridurans.